The primary structure comprises 143 residues: Probable cyclic pyranopterin monophosphate synthase (143 aa).

Residues Met61–His63 and Met97–Glu98 each bind substrate. Asp112 is a catalytic residue.

This sequence belongs to the MoaC family. In terms of assembly, homohexamer; trimer of dimers.

It catalyses the reaction (8S)-3',8-cyclo-7,8-dihydroguanosine 5'-triphosphate = cyclic pyranopterin phosphate + diphosphate. It functions in the pathway cofactor biosynthesis; molybdopterin biosynthesis. Its function is as follows. Catalyzes the conversion of (8S)-3',8-cyclo-7,8-dihydroguanosine 5'-triphosphate to cyclic pyranopterin monophosphate (cPMP). This Sulfolobus acidocaldarius (strain ATCC 33909 / DSM 639 / JCM 8929 / NBRC 15157 / NCIMB 11770) protein is Probable cyclic pyranopterin monophosphate synthase.